The following is a 475-amino-acid chain: FAD-dependent monooxygenase spyC (475 aa).

The signal sequence occupies residues 1-24 (MTAKPPFKVIIVGGSIAGLTLAHC). Residues glutamate 36, glycine 50, arginine 109, aspartate 310, and alanine 323 each contribute to the FAD site. A helical transmembrane segment spans residues 444 to 464 (LLIPFLYPVVAFSLCVLAWIG).

Belongs to the paxM FAD-dependent monooxygenase family. The cofactor is FAD.

The protein resides in the membrane. The enzyme catalyses (2E,6E,10E)-geranylgeranyl-triacetate lactone + AH2 + O2 = (S)-(2E,6E,10E)-epoxygeranylgeranyl-triacetate lactone + A + H2O. The protein operates within secondary metabolite biosynthesis; terpenoid biosynthesis. In terms of biological role, FAD-dependent monooxygenase spyC; part of the gene cluster that mediates the biosynthesis of meroterpenoids called sartorypyrones. Within the pathway, spyC catalyzes the epoxidation of geranylgeranyl-triacetate lactone at the terminal olein to yield epoxygeranylgeranyl-triacetate lactone. The biosynthesis of sartorypyrones begins with the production of triacetic acid lactone (TAL) by the NR-PKS spyA using one molecule of acetyl-CoA and two molecules of malonyl-CoA. The prenyltransferase spyF then conjugates geranylgeranyl pyrophosphate (GGPP) to TAL to form geranylgeranyl-triacetate lactone, for which the pathway-specific geranylgeranyl pyrophosphate synthase (GGPS) spyE is required to provide GGPP. Subsequently, geranylgeranyl-triacetate lactone is epoxidized at the terminal olein by the FAD-dependent monooxygenase spyC, followed by cyclization of the terpenoid component catalyzed by the terpene cyclase spyD to produce both the bicyclic sartorypyrone F and the monocyclic sartorypyrone D. Finally, the last step of the biosynthesis involves the acetylation of the meroterpenoids sartorypyrones D and F by the acetyltransferase SpyB to produce sartorypyrones A and G, respectively. The chain is FAD-dependent monooxygenase spyC from Aspergillus fumigatus (strain ATCC MYA-4609 / CBS 101355 / FGSC A1100 / Af293) (Neosartorya fumigata).